We begin with the raw amino-acid sequence, 438 residues long: Coenzyme A disulfide reductase (438 aa).

Residue 8–33 (GAVAGGATCASQIRRLDKESDIIIFE) participates in FAD binding. Positions 15, 19, 22, 39, and 42 each coordinate substrate. Cysteine 43 serves as the catalytic Nucleophile. The active-site Redox-active is cysteine 43. Residue lysine 71 participates in substrate binding. NADP(+) is bound at residue 151–166 (VLVVGAGYVSLEVLEN). 267 to 277 (TNVPNIYAIGD) contacts FAD. Residue histidine 299 coordinates substrate. Tyrosine 419 lines the FAD pocket. A substrate-binding site is contributed by lysine 427.

The protein belongs to the class-III pyridine nucleotide-disulfide oxidoreductase family. As to quaternary structure, homodimer. FAD is required as a cofactor.

The enzyme catalyses NADP(+) + 2 CoA = CoA-disulfide + NADPH + H(+). Functionally, catalyzes specifically the NADPH-dependent reduction of coenzyme A disulfide. This is Coenzyme A disulfide reductase from Staphylococcus aureus (strain bovine RF122 / ET3-1).